Reading from the N-terminus, the 376-residue chain is Glutamate 5-kinase (376 aa).

Lys-15 is a binding site for ATP. Ser-55, Asp-142, and Asn-154 together coordinate substrate. ATP is bound by residues 174–175 (TD) and 216–222 (TGGMATK). The PUA domain occupies 281–359 (AGKVLVDAGA…AEIEQLLGYR (79 aa)).

Belongs to the glutamate 5-kinase family.

It is found in the cytoplasm. It carries out the reaction L-glutamate + ATP = L-glutamyl 5-phosphate + ADP. It functions in the pathway amino-acid biosynthesis; L-proline biosynthesis; L-glutamate 5-semialdehyde from L-glutamate: step 1/2. Catalyzes the transfer of a phosphate group to glutamate to form L-glutamate 5-phosphate. This Trichlorobacter lovleyi (strain ATCC BAA-1151 / DSM 17278 / SZ) (Geobacter lovleyi) protein is Glutamate 5-kinase.